A 1132-amino-acid chain; its full sequence is Fas-binding factor 1 homolog (1132 aa).

Disordered stretches follow at residues 18–50 (DDLL…LQAS), 65–84 (AEDM…PQAV), and 89–570 (KEMD…QSYE). Residues 35–46 (AGVSSGRARGSS) are compositionally biased toward low complexity. Basic and acidic residues-rich tracts occupy residues 134–148 (APEK…DKKP) and 189–206 (GSER…EKDP). The segment covering 226-235 (TFEDDDDDMM) has biased composition (acidic residues). Composition is skewed to basic and acidic residues over residues 244 to 270 (QKGD…DELL) and 278 to 303 (ILER…PEKE). Composition is skewed to polar residues over residues 331–341 (RQSVSRFSAEN) and 388–410 (AKTS…SKPN). Low complexity-rich tracts occupy residues 458–480 (ATST…ADSS) and 511–520 (PSDPAASSPA). A compositionally biased stretch (polar residues) spans 534–548 (TMPSTPLQAASQLQA). Coiled coils occupy residues 576–727 (RAAL…TSAT), 769–882 (ARQR…LAVE), and 918–1044 (LAKE…HKKL).

It localises to the cytoplasm. It is found in the cytoskeleton. The protein localises to the microtubule organizing center. Its subcellular location is the centrosome. The protein resides in the centriole. It localises to the spindle pole. It is found in the cell junction. In terms of biological role, keratin-binding protein required for epithelial cell polarization. Required for ciliogenesis. The protein is Fas-binding factor 1 homolog (FBF1) of Gallus gallus (Chicken).